Here is a 265-residue protein sequence, read N- to C-terminus: Mlc titration factor A (265 aa).

4 residues coordinate Zn(2+): His-111, His-148, His-152, and Glu-211.

The protein belongs to the MtfA family. Interacts with Mlc. Zn(2+) is required as a cofactor.

The protein localises to the cytoplasm. Involved in the modulation of the activity of the glucose-phosphotransferase system (glucose-PTS). Interacts with the transcriptional repressor Mlc, preventing its interaction with DNA and leading to the modulation of expression of genes regulated by Mlc, including ptsG, which encodes the PTS system glucose-specific EIICB component. Its function is as follows. Shows zinc-dependent metallopeptidase activity. This Salmonella paratyphi A (strain AKU_12601) protein is Mlc titration factor A.